Here is an 804-residue protein sequence, read N- to C-terminus: Probable replication endonuclease from prophage-like region (804 aa).

Residues tyrosine 498 and tyrosine 502 each act as O-(5'-phospho-DNA)-tyrosine intermediate in the active site.

It belongs to the phage GPA family.

Its function is as follows. Possible endonuclease which induces a single-strand cut and initiates DNA replication. The chain is Probable replication endonuclease from prophage-like region from Escherichia coli O6:H1 (strain CFT073 / ATCC 700928 / UPEC).